A 316-amino-acid chain; its full sequence is Methionyl-tRNA formyltransferase (316 aa).

Residue 112-115 (SLLP) participates in (6S)-5,6,7,8-tetrahydrofolate binding.

It belongs to the Fmt family.

It catalyses the reaction L-methionyl-tRNA(fMet) + (6R)-10-formyltetrahydrofolate = N-formyl-L-methionyl-tRNA(fMet) + (6S)-5,6,7,8-tetrahydrofolate + H(+). Its function is as follows. Attaches a formyl group to the free amino group of methionyl-tRNA(fMet). The formyl group appears to play a dual role in the initiator identity of N-formylmethionyl-tRNA by promoting its recognition by IF2 and preventing the misappropriation of this tRNA by the elongation apparatus. This is Methionyl-tRNA formyltransferase from Actinobacillus pleuropneumoniae serotype 7 (strain AP76).